The primary structure comprises 107 residues: uncharacterized protein (107 aa).

A helical membrane pass occupies residues 12–32; it reads IILNIFLALLLVYFIFHCIYG.

Its subcellular location is the membrane. This is an uncharacterized protein from Rickettsia prowazekii (strain Madrid E).